Consider the following 412-residue polypeptide: Glucose-1-phosphate adenylyltransferase (412 aa).

Alpha-D-glucose 1-phosphate is bound by residues tyrosine 98, glycine 163, 178-179 (EK), and serine 189.

Belongs to the bacterial/plant glucose-1-phosphate adenylyltransferase family. In terms of assembly, homotetramer.

It catalyses the reaction alpha-D-glucose 1-phosphate + ATP + H(+) = ADP-alpha-D-glucose + diphosphate. It participates in glycan biosynthesis; glycogen biosynthesis. In terms of biological role, involved in the biosynthesis of ADP-glucose, a building block required for the elongation reactions to produce glycogen. Catalyzes the reaction between ATP and alpha-D-glucose 1-phosphate (G1P) to produce pyrophosphate and ADP-Glc. The sequence is that of Glucose-1-phosphate adenylyltransferase from Thermosipho melanesiensis (strain DSM 12029 / CIP 104789 / BI429).